We begin with the raw amino-acid sequence, 155 residues long: Small ribosomal subunit protein uS7c (155 aa).

Belongs to the universal ribosomal protein uS7 family. As to quaternary structure, part of the 30S ribosomal subunit.

It is found in the plastid. The protein localises to the chloroplast. In terms of biological role, one of the primary rRNA binding proteins, it binds directly to 16S rRNA where it nucleates assembly of the head domain of the 30S subunit. The polypeptide is Small ribosomal subunit protein uS7c (rps7) (Pinus thunbergii (Japanese black pine)).